A 69-amino-acid chain; its full sequence is UPF0248 protein AF_0420 (69 aa).

It belongs to the UPF0248 family.

The polypeptide is UPF0248 protein AF_0420 (Archaeoglobus fulgidus (strain ATCC 49558 / DSM 4304 / JCM 9628 / NBRC 100126 / VC-16)).